The primary structure comprises 276 residues: Putative ABC transporter ATP-binding protein MA_4021 (276 aa).

An ABC transporter domain is found at 5–247 (FDLKNISYSY…DLNLLLSTNL (243 aa)). Residue 38–45 (GSNGSGKS) coordinates ATP.

Belongs to the ABC transporter superfamily.

It is found in the cell membrane. Its function is as follows. Probably part of an ABC transporter complex. Responsible for energy coupling to the transport system. In Methanosarcina acetivorans (strain ATCC 35395 / DSM 2834 / JCM 12185 / C2A), this protein is Putative ABC transporter ATP-binding protein MA_4021.